The chain runs to 91 residues: Na(+)/H(+) antiporter subunit F (91 aa).

3 consecutive transmembrane segments (helical) span residues 5–27, 34–53, and 63–82; these read ILMI…TLIG, IVAL…VIMM, and VVLV…SKFI.

It belongs to the CPA3 antiporters (TC 2.A.63) subunit F family. Forms a heterooligomeric complex that consists of seven subunits: MrpA, MrpB, MrpC, MrpD, MrpE, MrpF and MrpG.

It localises to the cell membrane. Its function is as follows. Mnh complex is a Na(+)Li(+)/H(+) antiporter involved in Na(+) and/or Li(+) excretion and Na(+) resistance. Na(+)/H(+) antiport consumes a transmembrane electrical potential, and is thus inferred to be electrogenic. Does not transport K(+), Ca(2+) or Mg(2+). The sequence is that of Na(+)/H(+) antiporter subunit F (mrpF) from Alkalihalophilus pseudofirmus (strain ATCC BAA-2126 / JCM 17055 / OF4) (Bacillus pseudofirmus).